A 327-amino-acid polypeptide reads, in one-letter code: Small ribosomal subunit protein uS4m (327 aa).

The S4 RNA-binding domain occupies Ser96–Val154. A compositionally biased stretch (polar residues) spans Ala156–Val173. The tract at residues Ala156–Leu199 is disordered. A compositionally biased stretch (basic and acidic residues) spans Ser174–Asn186.

Belongs to the universal ribosomal protein uS4 family. In terms of assembly, component of the mitochondrial small ribosomal subunit (mt-SSU). Mature yeast 74S mitochondrial ribosomes consist of a small (37S) and a large (54S) subunit. The 37S small subunit contains a 15S ribosomal RNA (15S mt-rRNA) and at least 32 different proteins. The 54S large subunit contains a 21S rRNA (21S mt-rRNA) and at least 45 different proteins. uS3m, uS4m and uS5m form the narrow entry site of the mRNA channel.

It localises to the mitochondrion. Component of the mitochondrial ribosome (mitoribosome), a dedicated translation machinery responsible for the synthesis of mitochondrial genome-encoded proteins, including at least some of the essential transmembrane subunits of the mitochondrial respiratory chain. The mitoribosomes are attached to the mitochondrial inner membrane and translation products are cotranslationally integrated into the membrane. In Schizosaccharomyces pombe (strain 972 / ATCC 24843) (Fission yeast), this protein is Small ribosomal subunit protein uS4m (nam9).